Here is a 130-residue protein sequence, read N- to C-terminus: Sulfurtransferase TusD (130 aa).

C78 (cysteine persulfide intermediate) is an active-site residue.

The protein belongs to the DsrE/TusD family. Heterohexamer, formed by a dimer of trimers. The hexameric TusBCD complex contains 2 copies each of TusB, TusC and TusD. The TusBCD complex interacts with TusE.

It localises to the cytoplasm. In terms of biological role, part of a sulfur-relay system required for 2-thiolation of 5-methylaminomethyl-2-thiouridine (mnm(5)s(2)U) at tRNA wobble positions. Accepts sulfur from TusA and transfers it in turn to TusE. The sequence is that of Sulfurtransferase TusD from Buchnera aphidicola subsp. Baizongia pistaciae (strain Bp).